Here is a 155-residue protein sequence, read N- to C-terminus: Gas vesicle protein K (155 aa).

This sequence belongs to the gas vesicle GvpK family.

It localises to the gas vesicle. In terms of biological role, might be involved in nucleating gas vesicle formation. Gas vesicles (GV) are hollow, gas filled proteinaceous nanostructures. During planktonic growth they allow positioning of the organism at a favorable depth for light or nutrient acquisition. Functionally, cluster expression in E.coli (gvpA1-gvpA2-gvpC-gvpN-gvpJ-gvpK-gvpF-gvpG-gvpV-gvpW) allows cells to float and produces irregularly shaped gas vesicles. The sequence is that of Gas vesicle protein K from Nostoc sp. (strain PCC 7120 / SAG 25.82 / UTEX 2576).